The following is a 107-amino-acid chain: uncharacterized protein (107 aa).

Transmembrane regions (helical) follow at residues 14–34 and 68–88; these read YLAE…IVAW and FFVF…LVPI.

It localises to the cell membrane. This is an uncharacterized protein from Haemophilus influenzae (strain ATCC 51907 / DSM 11121 / KW20 / Rd).